Reading from the N-terminus, the 819-residue chain is Leucine--tRNA ligase (819 aa).

Positions 42-52 (PYPSGRLHMGH) match the 'HIGH' region motif. Positions 576–580 (KMSKS) match the 'KMSKS' region motif. Position 579 (K579) interacts with ATP.

It belongs to the class-I aminoacyl-tRNA synthetase family.

The protein resides in the cytoplasm. The enzyme catalyses tRNA(Leu) + L-leucine + ATP = L-leucyl-tRNA(Leu) + AMP + diphosphate. The protein is Leucine--tRNA ligase of Nitrosococcus oceani (strain ATCC 19707 / BCRC 17464 / JCM 30415 / NCIMB 11848 / C-107).